Reading from the N-terminus, the 620-residue chain is PAN2-PAN3 deadenylation complex subunit PAN3 (620 aa).

The C3H1-type zinc-finger motif lies at 7–36 (SAKGTLCKNILIYGYCKYENKGCAFSHRRN). Disordered regions lie at residues 39–73 (ANSG…QPST) and 95–168 (VFVP…QPGP). Composition is skewed to polar residues over residues 63-73 (NVNTPSFQPST) and 101-126 (TPAS…TVSN). A pseudokinase domain region spans residues 226-482 (QSYPGGPEIV…LESYIRKHLA (257 aa)). Residues Arg-274, 323–330 (DYYPNAST), and 380–381 (SK) each bind ATP. The stretch at 483-521 (IRLLDVVDMLEDSNDYLESQLSTELENARLVRLMTKINF) forms a coiled coil. The knob domain stretch occupies residues 522–620 (IVDRPEWDNE…SVFRTITRGK (99 aa)).

Belongs to the protein kinase superfamily. PAN3 family. As to quaternary structure, homodimer. Forms a heterotrimer with a catalytic subunit PAN2 to form the poly(A)-nuclease (PAN) deadenylation complex. Interacts (via PAM-2 motif) with poly(A)-binding protein PAB1 (via PABC domain), conferring substrate specificity of the enzyme complex.

The protein resides in the cytoplasm. In terms of biological role, regulatory subunit of the poly(A)-nuclease (PAN) deadenylation complex, one of two cytoplasmic mRNA deadenylases involved in mRNA turnover. PAN specifically shortens poly(A) tails of RNA and the activity is stimulated by poly(A)-binding protein PAB1. PAN deadenylation is followed by rapid degradation of the shortened mRNA tails by the CCR4-NOT complex. Deadenylated mRNAs are then degraded by two alternative mechanisms, namely exosome-mediated 3'-5' exonucleolytic degradation, or deadenylation-dependent mRNA decaping and subsequent 5'-3' exonucleolytic degradation by XRN1. May also be involved in post-transcriptional maturation of mRNA poly(A) tails. PAN3 acts as a positive regulator for PAN activity, recruiting the catalytic subunit PAN2 to mRNA via its interaction with RNA and with PAB1. In Meyerozyma guilliermondii (strain ATCC 6260 / CBS 566 / DSM 6381 / JCM 1539 / NBRC 10279 / NRRL Y-324) (Yeast), this protein is PAN2-PAN3 deadenylation complex subunit PAN3.